We begin with the raw amino-acid sequence, 211 residues long: MKSEQLKIPQATAKRLPLYYRFIESLHAAGKQRVSSTELSQAVKVDSATIRRDFSYFGALGKKGYGYNVQYLLSFFRETLDQDERTNVILVGVGNLGTALLQYNFSKNNNTVITHAFDVDEKKIGTKVGEVPVYNWDKLEEIGLQNVSIAVLTVPASQAQKSADRLVKAGIEGILNFTPVRLSVPAHIRVHHIDLAVELQALVYFLKHYPL.

The segment at residues 18–57 (LYYRFIESLHAAGKQRVSSTELSQAVKVDSATIRRDFSYF) is a DNA-binding region (H-T-H motif). An NAD(+)-binding site is contributed by 92-97 (GVGNLG).

This sequence belongs to the transcriptional regulatory Rex family. As to quaternary structure, homodimer.

It is found in the cytoplasm. In terms of biological role, modulates transcription in response to changes in cellular NADH/NAD(+) redox state. The sequence is that of Redox-sensing transcriptional repressor Rex from Shouchella clausii (strain KSM-K16) (Alkalihalobacillus clausii).